A 262-amino-acid polypeptide reads, in one-letter code: Elongator complex protein 5 (262 aa).

Disordered stretches follow at residues 181–214 (TPLDGGLPAGASPKQPSPEAEQTTEPASSTFKIE) and 229–262 (PYERTSEPSEGNIIYTPDADDDFDEEDPDEDLCI). Polar residues predominate over residues 200–211 (AEQTTEPASSTF). Acidic residues predominate over residues 246-262 (DADDDFDEEDPDEDLCI).

The protein belongs to the ELP5 family. Component of the elongator complex composed of Elp1, Elp2, Elp3, Elp4, Elp5 and Elp6. The elongator complex associates with and stabilizes microtubules; efficient interaction requires the full complex.

It is found in the cytoplasm. The protein localises to the nucleus. The protein resides in the cytoskeleton. It localises to the spindle. It participates in tRNA modification; 5-methoxycarbonylmethyl-2-thiouridine-tRNA biosynthesis. In terms of biological role, component of the elongator complex, which is required for multiple tRNA modifications, including mcm5U (5-methoxycarbonylmethyl uridine), mcm5s2U (5-methoxycarbonylmethyl-2-thiouridine), and ncm5U (5-carbamoylmethyl uridine). The elongator complex catalyzes the formation of carboxymethyluridine in the wobble base at position 34 in tRNAs. Binding by the elongator complex stabilizes microtubules and promotes their growth. This induces central spindle asymmetry, promoting polarized signaling endosome trafficking during asymmetric cell division and cell fate assignation of sensory organ precursor cells. In Drosophila melanogaster (Fruit fly), this protein is Elongator complex protein 5.